Consider the following 74-residue polypeptide: Amphipathic peptide CT1 (74 aa).

The N-terminal stretch at 1–23 (MKTQIVILFISMIMLQMFVQIEG) is a signal peptide. The residue at position 37 (V37) is a Valine amide. The propeptide occupies 41–74 (GLRNLDDLDDLDLDHLFDSDVSDADLRLLKQMFR).

It belongs to the non-disulfide-bridged peptide (NDBP) superfamily. Short antimicrobial peptide (group 4) family. Expressed by the venom gland.

It localises to the secreted. Its subcellular location is the target cell membrane. In terms of biological role, antimicrobial peptide that is rapidly bactericidal against Gram-positive bacteria (MIC=12.5 ug/ml against S.aureus, and MIC=100 ug/ml against M.luteus). Is also active against clinical antibiotics-resistant bacterial strains. The polypeptide is Amphipathic peptide CT1 (Scorpiops tibetanus (Scorpion)).